Consider the following 257-residue polypeptide: 3-deoxy-manno-octulosonate cytidylyltransferase (257 aa).

The protein belongs to the KdsB family.

It is found in the cytoplasm. The enzyme catalyses 3-deoxy-alpha-D-manno-oct-2-ulosonate + CTP = CMP-3-deoxy-beta-D-manno-octulosonate + diphosphate. It participates in nucleotide-sugar biosynthesis; CMP-3-deoxy-D-manno-octulosonate biosynthesis; CMP-3-deoxy-D-manno-octulosonate from 3-deoxy-D-manno-octulosonate and CTP: step 1/1. The protein operates within bacterial outer membrane biogenesis; lipopolysaccharide biosynthesis. Functionally, activates KDO (a required 8-carbon sugar) for incorporation into bacterial lipopolysaccharide in Gram-negative bacteria. This Xylella fastidiosa (strain 9a5c) protein is 3-deoxy-manno-octulosonate cytidylyltransferase.